The chain runs to 278 residues: MALKNFNPTTPSQRQLVIVDRSGLYKGKPVKSLTEGLSSKGGRNNLGRITVRFQGGGHKRTYRLVDFKRRKFDVEGTVERLEYDPNRTAFIALITYADGEQAYILAPQRLAAGDKVIASDKAVDVKPGNAMPLQYVPVGSIVHNVELKPGKGGQVARSAGAYVQLVGRDAGMAILRLSSGEQRLVHGTCLATVGAVSNSDHGNINDGKAGRSRWRGKRPHVRGVVMNPVDHPHGGGEGRTSGGRHPVSPWGKPTKGKRTRSNKSTDKFIMRSRHQKKK.

The disordered stretch occupies residues 201 to 278 (HGNINDGKAG…IMRSRHQKKK (78 aa)). Residues 210–221 (GRSRWRGKRPHV) show a composition bias toward basic residues.

The protein belongs to the universal ribosomal protein uL2 family. As to quaternary structure, part of the 50S ribosomal subunit. Forms a bridge to the 30S subunit in the 70S ribosome.

In terms of biological role, one of the primary rRNA binding proteins. Required for association of the 30S and 50S subunits to form the 70S ribosome, for tRNA binding and peptide bond formation. It has been suggested to have peptidyltransferase activity; this is somewhat controversial. Makes several contacts with the 16S rRNA in the 70S ribosome. The protein is Large ribosomal subunit protein uL2 of Allorhizobium ampelinum (strain ATCC BAA-846 / DSM 112012 / S4) (Agrobacterium vitis (strain S4)).